The following is an 84-amino-acid chain: Extender of the chronological lifespan protein 2 (84 aa).

This sequence belongs to the ecl1 family.

It localises to the nucleus. In terms of biological role, involved in chronological cell aging. This is Extender of the chronological lifespan protein 2 (ecl2) from Schizosaccharomyces pombe (strain 972 / ATCC 24843) (Fission yeast).